Reading from the N-terminus, the 505-residue chain is Kelch-like protein 42 (505 aa).

Residues 5 to 78 (EMVQIRLEDR…INAGGAREGW (74 aa)) enclose the BTB domain. Ser43 is modified (phosphoserine). Kelch repeat units lie at residues 176 to 234 (PGDV…PLAN), 235 to 282 (NLPP…NEWL), 284 to 325 (VASM…DAWN), 327 to 372 (VAPL…DMWT), 374 to 429 (FETC…RQWL), and 431 to 480 (LKEN…DSWE).

In terms of assembly, component of the BCR(KLHL42) E3 ubiquitin ligase complex, at least composed of CUL3 and KLHL42. Interacts (via the BTB domain) with CUL3. Interacts (via the kelch domains) with KATNA1.

It is found in the cytoplasm. It localises to the cytoskeleton. Its subcellular location is the spindle. It participates in protein modification; protein ubiquitination. In terms of biological role, substrate-specific adapter of a BCR (BTB-CUL3-RBX1) E3 ubiquitin-protein ligase complex required for mitotic progression and cytokinesis. The BCR(KLHL42) E3 ubiquitin ligase complex mediates the ubiquitination and subsequent degradation of KATNA1. Involved in microtubule dynamics throughout mitosis. This Homo sapiens (Human) protein is Kelch-like protein 42 (KLHL42).